The following is a 282-amino-acid chain: Putative 4-diphosphocytidyl-2-C-methyl-D-erythritol kinase (282 aa).

The active site involves Lys-9. 93–103 serves as a coordination point for ATP; the sequence is PVSAGLAGGSA. The active site involves Asp-135.

The protein belongs to the GHMP kinase family. IspE subfamily.

It carries out the reaction 4-CDP-2-C-methyl-D-erythritol + ATP = 4-CDP-2-C-methyl-D-erythritol 2-phosphate + ADP + H(+). Functionally, catalyzes the phosphorylation of the position 2 hydroxy group of 4-diphosphocytidyl-2C-methyl-D-erythritol. The polypeptide is Putative 4-diphosphocytidyl-2-C-methyl-D-erythritol kinase (Staphylococcus aureus (strain MSSA476)).